The sequence spans 287 residues: Ribosomal RNA small subunit methyltransferase I (287 aa).

This sequence belongs to the methyltransferase superfamily. RsmI family.

The protein resides in the cytoplasm. The catalysed reaction is cytidine(1402) in 16S rRNA + S-adenosyl-L-methionine = 2'-O-methylcytidine(1402) in 16S rRNA + S-adenosyl-L-homocysteine + H(+). Catalyzes the 2'-O-methylation of the ribose of cytidine 1402 (C1402) in 16S rRNA. This is Ribosomal RNA small subunit methyltransferase I from Streptococcus pyogenes serotype M6 (strain ATCC BAA-946 / MGAS10394).